Consider the following 327-residue polypeptide: Opticin (327 aa).

The N-terminal stretch at 1–19 is a signal peptide; the sequence is MKLPAFLSLLALVLLEAGT. 2 positions are modified to sulfotyrosine: Tyr61 and Tyr67. Residues 111-148 enclose the LRRNT domain; that stretch reads VLGSPNSHGLPTCLICVCLGSSVYCDDADLENIPPLPK. LRR repeat units lie at residues 149–170, 173–194, 197–218, 219–237, 243–263, 264–285, and 295–315; these read TTTY…DFKG, KLKR…ALRL, ALQD…PPAI, EVLD…QPEA, KLQF…PLPP, SLRS…AFCD, and WLED…PSAY. An intrachain disulfide couples Cys284 to Cys317.

It belongs to the small leucine-rich proteoglycan (SLRP) family. SLRP class III subfamily. As to quaternary structure, homodimer. Post-translationally, O-glycosylated. Proteolytically cleaved by MMP1, MMP2, MMP3, MMP7, MMP8, MMP9, ADAMTS4, and ADAMTS5. Proteolytically cleaved by MMP13. In terms of processing, sulfated on tyrosine residues. In terms of tissue distribution, ocular tissues, cartilage, ligament, skin, muscle and testes.

It localises to the secreted. The protein localises to the extracellular space. Its subcellular location is the extracellular matrix. Its function is as follows. Inhibits angiogenesis in the vitreous humor of the eye, and therefore represses neovascularization. Binds collagen fibrils. May be involved in collagen fiber organization via regulation of other members of the small leucine-rich repeat proteoglycan superfamily. The polypeptide is Opticin (OPTC) (Canis lupus familiaris (Dog)).